The primary structure comprises 1643 residues: DNA-directed RNA polymerase subunit beta' (1643 aa).

Zn(2+) is bound by residues cysteine 64, cysteine 66, cysteine 79, and cysteine 82. Residues aspartate 684, aspartate 686, and aspartate 688 each contribute to the Mg(2+) site. Residues cysteine 1046, cysteine 1239, cysteine 1246, and cysteine 1249 each contribute to the Zn(2+) site.

It belongs to the RNA polymerase beta' chain family. In terms of assembly, the RNAP catalytic core consists of 2 alpha, 1 beta, 1 beta' and 1 omega subunit. When a sigma factor is associated with the core the holoenzyme is formed, which can initiate transcription. Mg(2+) serves as cofactor. Requires Zn(2+) as cofactor.

It catalyses the reaction RNA(n) + a ribonucleoside 5'-triphosphate = RNA(n+1) + diphosphate. Functionally, DNA-dependent RNA polymerase catalyzes the transcription of DNA into RNA using the four ribonucleoside triphosphates as substrates. The polypeptide is DNA-directed RNA polymerase subunit beta' (Petrotoga mobilis (strain DSM 10674 / SJ95)).